Reading from the N-terminus, the 147-residue chain is Hemoglobin subunit beta (147 aa).

N-acetylvaline is present on V2. In terms of domain architecture, Globin spans 3-147 (HLTPEEKSAV…VANALAHKYH (145 aa)). Position 13 is a phosphothreonine (T13). A Phosphoserine modification is found at S45. K60 carries the N6-acetyllysine modification. A heme b-binding site is contributed by H64. Residue K83 is modified to N6-acetyllysine. H93 is a heme b binding site. Residue C94 is modified to S-nitrosocysteine. K145 bears the N6-acetyllysine mark.

Belongs to the globin family. Heterotetramer of two alpha chains and two beta chains. In terms of tissue distribution, red blood cells.

Functionally, involved in oxygen transport from the lung to the various peripheral tissues. The chain is Hemoglobin subunit beta (HBB) from Gorilla gorilla gorilla (Western lowland gorilla).